We begin with the raw amino-acid sequence, 279 residues long: Pantothenate synthetase (279 aa).

31–38 contacts ATP; sequence MGNLHGGH. Residue His-38 is the Proton donor of the active site. Gln-62 is a binding site for (R)-pantoate. Gln-62 lines the beta-alanine pocket. Residue 150 to 153 coordinates ATP; that stretch reads GRKD. Residue Gln-156 coordinates (R)-pantoate. ATP-binding positions include Val-179 and 187-190; that span reads KSSR.

The protein belongs to the pantothenate synthetase family. Homodimer.

It is found in the cytoplasm. The enzyme catalyses (R)-pantoate + beta-alanine + ATP = (R)-pantothenate + AMP + diphosphate + H(+). The protein operates within cofactor biosynthesis; (R)-pantothenate biosynthesis; (R)-pantothenate from (R)-pantoate and beta-alanine: step 1/1. Its function is as follows. Catalyzes the condensation of pantoate with beta-alanine in an ATP-dependent reaction via a pantoyl-adenylate intermediate. The polypeptide is Pantothenate synthetase (Stenotrophomonas maltophilia (strain R551-3)).